The sequence spans 494 residues: Hepatic triacylglycerol lipase (494 aa).

The signal sequence occupies residues 1–21 (MGNHLQISVSLVLCIFIQSSA). Asparagine 79 carries an N-linked (GlcNAc...) asparagine glycan. Serine 169 functions as the Nucleophile in the catalytic mechanism. The active-site Charge relay system is the aspartate 195. The interval 255–278 (CHFLELYKHIAEHGLNAITQTINC) is essential for determining substrate specificity. Residue histidine 280 is the Charge relay system of the active site. Positions 353–487 (YHYQFKIQFI…HPTQEKVFVK (135 aa)) constitute a PLAT domain. A glycan (N-linked (GlcNAc...) asparagine) is linked at asparagine 398.

The protein belongs to the AB hydrolase superfamily. Lipase family. In terms of assembly, homodimer.

The protein resides in the secreted. The enzyme catalyses a triacylglycerol + H2O = a diacylglycerol + a fatty acid + H(+). The catalysed reaction is a 1-acyl-sn-glycero-3-phosphocholine + H2O = sn-glycerol 3-phosphocholine + a fatty acid + H(+). It carries out the reaction a 1,2-diacyl-sn-glycero-3-phosphocholine + H2O = a 2-acyl-sn-glycero-3-phosphocholine + a fatty acid + H(+). It catalyses the reaction 1,2-di-(9Z-octadecenoyl)-sn-glycerol + H2O = 2-(9Z-octadecenoyl)-glycerol + (9Z)-octadecenoate + H(+). The enzyme catalyses 1,2,3-tri-(9Z-octadecenoyl)-glycerol + H2O = 2,3-di-(9Z)-octadecenoyl-sn-glycerol + (9Z)-octadecenoate + H(+). The catalysed reaction is 1-(9Z-octadecenoyl)-sn-glycero-3-phospho-L-serine + H2O = sn-glycero-3-phospho-L-serine + (9Z)-octadecenoate + H(+). It carries out the reaction 1-hexadecanoyl-sn-glycero-3-phosphocholine + H2O = sn-glycerol 3-phosphocholine + hexadecanoate + H(+). It catalyses the reaction 1,3-di-(9Z-octadecenoyl)-glycerol + H2O = 3-(9Z-octadecenoyl)-sn-glycerol + (9Z)-octadecenoate + H(+). The enzyme catalyses 1,2,3-tri-(9Z-octadecenoyl)-glycerol + H2O = di-(9Z)-octadecenoylglycerol + (9Z)-octadecenoate + H(+). The catalysed reaction is 1,2-di-(9Z-octadecenoyl)-sn-glycero-3-phosphocholine + H2O = (9Z-octadecenoyl)-sn-glycero-3-phosphocholine + (9Z)-octadecenoate + H(+). It carries out the reaction 1,2,3-tributanoylglycerol + H2O = dibutanoylglycerol + butanoate + H(+). It catalyses the reaction 1,2-dihexadecanoyl-sn-glycero-3-phosphocholine + H2O = hexadecanoyl-sn-glycero-3-phosphocholine + hexadecanoate + H(+). Phospholipase A1 and lysophospholipase activities are inhibited by annexin II. Its function is as follows. Catalyzes the hydrolysis of triglycerides and phospholipids present in circulating plasma lipoproteins, including chylomicrons, intermediate density lipoproteins (IDL), low density lipoproteins (LDL) of large size and high density lipoproteins (HDL), releasing free fatty acids (FFA) and smaller lipoprotein particles. Also exhibits lysophospholipase activity. Can hydrolyze both neutral lipid and phospholipid substrates but shows a greater binding affinity for neutral lipid substrates than phospholipid substrates. In native LDL, preferentially hydrolyzes the phosphatidylcholine species containing polyunsaturated fatty acids at sn-2 position. The sequence is that of Hepatic triacylglycerol lipase (Lipc) from Rattus norvegicus (Rat).